The chain runs to 593 residues: Aspartate--tRNA(Asp/Asn) ligase (593 aa).

Residue Glu182 participates in L-aspartate binding. The tract at residues 206–209 (QLFK) is aspartate. Arg228 contacts L-aspartate. ATP contacts are provided by residues 228 to 230 (RDE) and Gln237. His455 is an L-aspartate binding site. Glu489 lines the ATP pocket. L-aspartate is bound at residue Arg496. ATP is bound at residue 541-544 (GLDR).

It belongs to the class-II aminoacyl-tRNA synthetase family. Type 1 subfamily. As to quaternary structure, homodimer.

Its subcellular location is the cytoplasm. It catalyses the reaction tRNA(Asx) + L-aspartate + ATP = L-aspartyl-tRNA(Asx) + AMP + diphosphate. Its function is as follows. Aspartyl-tRNA synthetase with relaxed tRNA specificity since it is able to aspartylate not only its cognate tRNA(Asp) but also tRNA(Asn). Reaction proceeds in two steps: L-aspartate is first activated by ATP to form Asp-AMP and then transferred to the acceptor end of tRNA(Asp/Asn). The chain is Aspartate--tRNA(Asp/Asn) ligase from Geotalea uraniireducens (strain Rf4) (Geobacter uraniireducens).